Consider the following 297-residue polypeptide: Nucleotide-binding protein Bphyt_0592 (297 aa).

8–15 (GISGSGKS) is a binding site for ATP. 57 to 60 (DARS) contacts GTP.

This sequence belongs to the RapZ-like family.

Displays ATPase and GTPase activities. The chain is Nucleotide-binding protein Bphyt_0592 from Paraburkholderia phytofirmans (strain DSM 17436 / LMG 22146 / PsJN) (Burkholderia phytofirmans).